A 290-amino-acid chain; its full sequence is Acetylglutamate kinase (290 aa).

Residues 65–66 (GG), arginine 87, and asparagine 186 contribute to the substrate site.

The protein belongs to the acetylglutamate kinase family. ArgB subfamily.

The protein resides in the cytoplasm. The catalysed reaction is N-acetyl-L-glutamate + ATP = N-acetyl-L-glutamyl 5-phosphate + ADP. It functions in the pathway amino-acid biosynthesis; L-arginine biosynthesis; N(2)-acetyl-L-ornithine from L-glutamate: step 2/4. Catalyzes the ATP-dependent phosphorylation of N-acetyl-L-glutamate. In Mycobacterium sp. (strain KMS), this protein is Acetylglutamate kinase.